Here is a 185-residue protein sequence, read N- to C-terminus: Ribonuclease M5 (185 aa).

The region spanning 3–84 (KEVIVVEGRD…KHARISQSEG (82 aa)) is the Toprim domain. Glutamate 9, aspartate 55, and aspartate 57 together coordinate Mg(2+).

The protein belongs to the ribonuclease M5 family. Requires Mg(2+) as cofactor.

The protein localises to the cytoplasm. The enzyme catalyses Endonucleolytic cleavage of RNA, removing 21 and 42 nucleotides, respectively, from the 5'- and 3'-termini of a 5S-rRNA precursor.. Its function is as follows. Required for correct processing of both the 5' and 3' ends of 5S rRNA precursor. Cleaves both sides of a double-stranded region yielding mature 5S rRNA in one step. This chain is Ribonuclease M5, found in Clostridium acetobutylicum (strain ATCC 824 / DSM 792 / JCM 1419 / IAM 19013 / LMG 5710 / NBRC 13948 / NRRL B-527 / VKM B-1787 / 2291 / W).